Reading from the N-terminus, the 210-residue chain is Cell division protein SepF (210 aa).

Low complexity-rich tracts occupy residues Q36–Q47 and R59–S69. Disordered stretches follow at residues Q36–S69 and N182–Q210.

The protein belongs to the SepF family. Homodimer. Interacts with FtsZ.

The protein resides in the cytoplasm. Functionally, cell division protein that is part of the divisome complex and is recruited early to the Z-ring. Probably stimulates Z-ring formation, perhaps through the cross-linking of FtsZ protofilaments. Its function overlaps with FtsA. In Trichodesmium erythraeum (strain IMS101), this protein is Cell division protein SepF.